Here is a 572-residue protein sequence, read N- to C-terminus: Proline--tRNA ligase (572 aa).

Belongs to the class-II aminoacyl-tRNA synthetase family. ProS type 1 subfamily. In terms of assembly, homodimer.

It localises to the cytoplasm. It carries out the reaction tRNA(Pro) + L-proline + ATP = L-prolyl-tRNA(Pro) + AMP + diphosphate. Its function is as follows. Catalyzes the attachment of proline to tRNA(Pro) in a two-step reaction: proline is first activated by ATP to form Pro-AMP and then transferred to the acceptor end of tRNA(Pro). As ProRS can inadvertently accommodate and process non-cognate amino acids such as alanine and cysteine, to avoid such errors it has two additional distinct editing activities against alanine. One activity is designated as 'pretransfer' editing and involves the tRNA(Pro)-independent hydrolysis of activated Ala-AMP. The other activity is designated 'posttransfer' editing and involves deacylation of mischarged Ala-tRNA(Pro). The misacylated Cys-tRNA(Pro) is not edited by ProRS. The sequence is that of Proline--tRNA ligase from Klebsiella pneumoniae (strain 342).